A 303-amino-acid polypeptide reads, in one-letter code: Ribosomal protein L11 methyltransferase (303 aa).

Positions 144, 165, 187, and 235 each coordinate S-adenosyl-L-methionine.

It belongs to the methyltransferase superfamily. PrmA family.

Its subcellular location is the cytoplasm. It catalyses the reaction L-lysyl-[protein] + 3 S-adenosyl-L-methionine = N(6),N(6),N(6)-trimethyl-L-lysyl-[protein] + 3 S-adenosyl-L-homocysteine + 3 H(+). In terms of biological role, methylates ribosomal protein L11. This Prochlorococcus marinus (strain MIT 9312) protein is Ribosomal protein L11 methyltransferase.